Here is a 195-residue protein sequence, read N- to C-terminus: Probable GTP-binding protein EngB (195 aa).

In terms of domain architecture, EngB-type G spans 22–195 (GRPEVALAGR…WAALLPFLTE (174 aa)). Residues 30–37 (GRSNVGKS), 57–61 (GKTQT), 75–78 (DVPG), 142–145 (TKAD), and 174–176 (FSS) each bind GTP. 2 residues coordinate Mg(2+): Ser37 and Thr59.

Belongs to the TRAFAC class TrmE-Era-EngA-EngB-Septin-like GTPase superfamily. EngB GTPase family. The cofactor is Mg(2+).

Functionally, necessary for normal cell division and for the maintenance of normal septation. The polypeptide is Probable GTP-binding protein EngB (Geobacillus thermodenitrificans (strain NG80-2)).